A 316-amino-acid polypeptide reads, in one-letter code: Transaldolase (316 aa).

The Schiff-base intermediate with substrate role is filled by Lys131.

This sequence belongs to the transaldolase family. Type 1 subfamily. Homodimer.

It localises to the cytoplasm. The enzyme catalyses D-sedoheptulose 7-phosphate + D-glyceraldehyde 3-phosphate = D-erythrose 4-phosphate + beta-D-fructose 6-phosphate. The protein operates within carbohydrate degradation; pentose phosphate pathway; D-glyceraldehyde 3-phosphate and beta-D-fructose 6-phosphate from D-ribose 5-phosphate and D-xylulose 5-phosphate (non-oxidative stage): step 2/3. Functionally, transaldolase is important for the balance of metabolites in the pentose-phosphate pathway. In Buchnera aphidicola subsp. Baizongia pistaciae (strain Bp), this protein is Transaldolase.